Reading from the N-terminus, the 291-residue chain is tRNA U34 carboxymethyltransferase (291 aa).

Carboxy-S-adenosyl-L-methionine is bound by residues lysine 61, tryptophan 75, lysine 80, glycine 100, 122–124 (DPS), 149–150 (VE), tyrosine 169, and arginine 284.

It belongs to the class I-like SAM-binding methyltransferase superfamily. CmoB family. In terms of assembly, homotetramer.

The enzyme catalyses carboxy-S-adenosyl-L-methionine + 5-hydroxyuridine(34) in tRNA = 5-carboxymethoxyuridine(34) in tRNA + S-adenosyl-L-homocysteine + H(+). In terms of biological role, catalyzes carboxymethyl transfer from carboxy-S-adenosyl-L-methionine (Cx-SAM) to 5-hydroxyuridine (ho5U) to form 5-carboxymethoxyuridine (cmo5U) at position 34 in tRNAs. In Campylobacter jejuni (strain RM1221), this protein is tRNA U34 carboxymethyltransferase.